A 652-amino-acid chain; its full sequence is Carboxypeptidase S1 homolog A (652 aa).

The first 19 residues, 1–19, serve as a signal peptide directing secretion; sequence MRLAASIAVALPVIGAASA. Cysteine 50 and cysteine 121 are oxidised to a cystine. 6 N-linked (GlcNAc...) asparagine glycosylation sites follow: asparagine 77, asparagine 132, asparagine 161, asparagine 168, asparagine 184, and asparagine 202. The active site involves serine 238. Residues asparagine 260, asparagine 299, asparagine 347, and asparagine 410 are each glycosylated (N-linked (GlcNAc...) asparagine). Disulfide bonds link cysteine 325–cysteine 361 and cysteine 332–cysteine 354. Aspartate 458 is a catalytic residue. Cysteine 461 provides a ligand contact to substrate. Asparagine 474, asparagine 492, and asparagine 505 each carry an N-linked (GlcNAc...) asparagine glycan. The active site involves histidine 516. Substrate is bound at residue glutamate 517. An N-linked (GlcNAc...) asparagine glycan is attached at asparagine 594. The interval 608–628 is disordered; sequence AASKGNPPPTTTSSPTASPTA. Low complexity predominate over residues 618-628; sequence TTSSPTASPTA. The GPI-anchor amidated glycine moiety is linked to residue glycine 629. The propeptide at 630 to 652 is removed in mature form; it reads SAMLKAPVAMLAISALTVLAFYL.

It belongs to the peptidase S10 family.

The protein localises to the cell membrane. The enzyme catalyses Preferential release of a C-terminal arginine or lysine residue.. Its function is as follows. Extracellular serine carboxypeptidase that contributes to pathogenicity. In Trichophyton verrucosum (strain HKI 0517), this protein is Carboxypeptidase S1 homolog A (SCPA).